The chain runs to 429 residues: Asparagine--tRNA ligase (429 aa).

This sequence belongs to the class-II aminoacyl-tRNA synthetase family. In terms of assembly, homodimer.

Its subcellular location is the cytoplasm. The catalysed reaction is tRNA(Asn) + L-asparagine + ATP = L-asparaginyl-tRNA(Asn) + AMP + diphosphate + H(+). The sequence is that of Asparagine--tRNA ligase from Desulforamulus reducens (strain ATCC BAA-1160 / DSM 100696 / MI-1) (Desulfotomaculum reducens).